The primary structure comprises 304 residues: Porphobilinogen deaminase (304 aa).

Position 240 is an S-(dipyrrolylmethanemethyl)cysteine (cysteine 240).

Belongs to the HMBS family. Monomer. Requires dipyrromethane as cofactor.

It carries out the reaction 4 porphobilinogen + H2O = hydroxymethylbilane + 4 NH4(+). The protein operates within porphyrin-containing compound metabolism; protoporphyrin-IX biosynthesis; coproporphyrinogen-III from 5-aminolevulinate: step 2/4. Tetrapolymerization of the monopyrrole PBG into the hydroxymethylbilane pre-uroporphyrinogen in several discrete steps. The protein is Porphobilinogen deaminase of Xanthomonas oryzae pv. oryzae (strain KACC10331 / KXO85).